A 303-amino-acid chain; its full sequence is Glucosyl-3-phosphoglycerate synthase (303 aa).

Residues 35-39 (PALNE), S66, K99, and 119-120 (DS) each bind UDP-alpha-D-glucose. A Mn(2+)-binding site is contributed by D121. 166–169 (GRVT) provides a ligand contact to (2R)-3-phosphoglycerate. UDP-alpha-D-glucose-binding positions include 211 to 214 (YGVE) and 238 to 243 (RAHRNR). H240 serves as a coordination point for Mn(2+). N242 is a binding site for (2R)-3-phosphoglycerate.

It belongs to the glycosyltransferase 2 family. In terms of assembly, homotrimer. Mg(2+) serves as cofactor. It depends on Mn(2+) as a cofactor.

The enzyme catalyses an NDP-alpha-D-glucose + (2R)-3-phosphoglycerate = (2R)-2-O-(alpha-D-glucopyranosyl)-3-phospho-glycerate + a ribonucleoside 5'-diphosphate + H(+). The catalysed reaction is (2R)-3-phosphoglycerate + UDP-alpha-D-glucose = (2R)-2-O-(alpha-D-glucopyranosyl)-3-phospho-glycerate + UDP + H(+). It catalyses the reaction ADP-alpha-D-glucose + (2R)-3-phosphoglycerate = (2R)-2-O-(alpha-D-glucopyranosyl)-3-phospho-glycerate + ADP + H(+). It carries out the reaction GDP-D-glucose + (2R)-3-phosphoglycerate = (2R)-2-O-(alpha-D-glucopyranosyl)-3-phospho-glycerate + GDP + H(+). In terms of biological role, involved in the biosynthesis of 6-O-methylglucose lipopolysaccarides (MGLPs). Catalyzes the transfer of the glucose moiety from a nuleotide sugar such as UDP-alpha-D-glucose to the position 2 of 3-phospho-D-glycerate (3-PGA) to form glucosyl-3-phosphoglycerate (GPG). It can use UDP-glucose, ADP-glucose and GDP-glucose as sugar donor substrates with decreasing affinity and with 3-PGA as an acceptor. D-glycerate can only be an acceptor with ADP-glucose and at a very low rate. The chain is Glucosyl-3-phosphoglycerate synthase (gpgS) from Mycolicibacterium smegmatis (strain ATCC 700084 / mc(2)155) (Mycobacterium smegmatis).